Consider the following 98-residue polypeptide: Large ribosomal subunit protein uL23 (98 aa).

It belongs to the universal ribosomal protein uL23 family. In terms of assembly, part of the 50S ribosomal subunit. Contacts protein L29, and trigger factor when it is bound to the ribosome.

Its function is as follows. One of the early assembly proteins it binds 23S rRNA. One of the proteins that surrounds the polypeptide exit tunnel on the outside of the ribosome. Forms the main docking site for trigger factor binding to the ribosome. This chain is Large ribosomal subunit protein uL23, found in Lactobacillus delbrueckii subsp. bulgaricus (strain ATCC 11842 / DSM 20081 / BCRC 10696 / JCM 1002 / NBRC 13953 / NCIMB 11778 / NCTC 12712 / WDCM 00102 / Lb 14).